We begin with the raw amino-acid sequence, 515 residues long: Galactokinase (515 aa).

Residues Arg-48, Asp-54, His-55, and Asp-57 each contribute to the alpha-D-galactose site. Residues Gly-155, Gly-157, Ser-159, and Ser-160 each contribute to the ATP site. Residue Asp-205 participates in alpha-D-galactose binding. Residue Asp-205 is the Proton acceptor of the active site. ATP is bound by residues Ser-249, Asn-250, and Lys-251. Tyr-259 is a binding site for alpha-D-galactose.

The protein belongs to the GHMP kinase family. GalK subfamily.

It carries out the reaction alpha-D-galactose + ATP = alpha-D-galactose 1-phosphate + ADP + H(+). The protein operates within carbohydrate metabolism; galactose metabolism. Galactokinase is a key enzyme in the galactose metabolism where it catalyzes the conversion of alpha-D-galactose to galactose 1-phosphate. Can also induce the transcription of the gal genes in response to the organism being challenged with galactose as the sole source of carbon. This is Galactokinase from Candida albicans (Yeast).